The chain runs to 661 residues: UvrABC system protein B (661 aa).

The Helicase ATP-binding domain maps to 26–181 (KGIQEGRKHQ…LLRKLVDIQY (156 aa)). 39–46 (GATGTGKT) contributes to the ATP binding site. The Beta-hairpin motif lies at 92–115 (YYDYYQPEAYVPQTDTFIEKDASI). In terms of domain architecture, Helicase C-terminal spans 430–596 (QIDDLIGEIQ…TINKEIRDVI (167 aa)). The UVR domain maps to 625–660 (QKVVEQMEHEMKEAARALDFERAAELRDLLLELKAE).

This sequence belongs to the UvrB family. As to quaternary structure, forms a heterotetramer with UvrA during the search for lesions. Interacts with UvrC in an incision complex.

Its subcellular location is the cytoplasm. Functionally, the UvrABC repair system catalyzes the recognition and processing of DNA lesions. A damage recognition complex composed of 2 UvrA and 2 UvrB subunits scans DNA for abnormalities. Upon binding of the UvrA(2)B(2) complex to a putative damaged site, the DNA wraps around one UvrB monomer. DNA wrap is dependent on ATP binding by UvrB and probably causes local melting of the DNA helix, facilitating insertion of UvrB beta-hairpin between the DNA strands. Then UvrB probes one DNA strand for the presence of a lesion. If a lesion is found the UvrA subunits dissociate and the UvrB-DNA preincision complex is formed. This complex is subsequently bound by UvrC and the second UvrB is released. If no lesion is found, the DNA wraps around the other UvrB subunit that will check the other stand for damage. The sequence is that of UvrABC system protein B from Bacillus velezensis (strain DSM 23117 / BGSC 10A6 / LMG 26770 / FZB42) (Bacillus amyloliquefaciens subsp. plantarum).